A 341-amino-acid polypeptide reads, in one-letter code: Biotin synthase (341 aa).

The Radical SAM core domain occupies 39 to 263 (EQVQLCTLLS…VAVARITMPL (225 aa)). Residues C54, C58, and C61 each contribute to the [4Fe-4S] cluster site. [2Fe-2S] cluster contacts are provided by C98, C129, C189, and R267.

It belongs to the radical SAM superfamily. Biotin synthase family. In terms of assembly, homodimer. It depends on [4Fe-4S] cluster as a cofactor. [2Fe-2S] cluster serves as cofactor.

It catalyses the reaction (4R,5S)-dethiobiotin + (sulfur carrier)-SH + 2 reduced [2Fe-2S]-[ferredoxin] + 2 S-adenosyl-L-methionine = (sulfur carrier)-H + biotin + 2 5'-deoxyadenosine + 2 L-methionine + 2 oxidized [2Fe-2S]-[ferredoxin]. The protein operates within cofactor biosynthesis; biotin biosynthesis; biotin from 7,8-diaminononanoate: step 2/2. Its function is as follows. Catalyzes the conversion of dethiobiotin (DTB) to biotin by the insertion of a sulfur atom into dethiobiotin via a radical-based mechanism. The chain is Biotin synthase from Erythrobacter litoralis (strain HTCC2594).